Reading from the N-terminus, the 246-residue chain is MEGWQRAFVIHARPYSETSLLLDFFTENEGRVRILSKGARGRRSPLKGALQPFTPLLIRWSGRGEIKTLRDAEPISLALPLTGTVLYSGLYLNELLSRVLENGTSYSTLFFEYLSCLQILAASETTPEAALRRFELALLTQLGYGLDFLHCAGSGEPVSDTMTYRYREEKGFIASLVVDHYSFTGLELKSLAKREFPTAGTLKAAKRFTRMALKPYLGGKPLKSRELFRQFAIKKCAKKSVLIEDK.

Belongs to the RecO family.

In terms of biological role, involved in DNA repair and RecF pathway recombination. The protein is DNA repair protein RecO of Proteus mirabilis (strain HI4320).